Reading from the N-terminus, the 337-residue chain is Glyceraldehyde-3-phosphate dehydrogenase (337 aa).

Residues 11-12 (TV), 34-35 (TR), and Gly110 each bind NADP(+). 139-141 (SCN) provides a ligand contact to D-glyceraldehyde 3-phosphate. The active-site Nucleophile is the Cys140. Position 171 (Asp171) interacts with NADP(+). Position 194–195 (194–195 (HG)) interacts with D-glyceraldehyde 3-phosphate. Residue Gln300 coordinates NADP(+).

Belongs to the glyceraldehyde-3-phosphate dehydrogenase family. As to quaternary structure, homotetramer.

The protein resides in the cytoplasm. It catalyses the reaction D-glyceraldehyde 3-phosphate + phosphate + NADP(+) = (2R)-3-phospho-glyceroyl phosphate + NADPH + H(+). The enzyme catalyses D-glyceraldehyde 3-phosphate + phosphate + NAD(+) = (2R)-3-phospho-glyceroyl phosphate + NADH + H(+). It participates in carbohydrate degradation; glycolysis; pyruvate from D-glyceraldehyde 3-phosphate: step 1/5. In terms of biological role, exhibits a dual-cofactor specificity, with a marked preference for NADP(+) over NAD(+). The polypeptide is Glyceraldehyde-3-phosphate dehydrogenase (gap) (Methanothermus fervidus).